We begin with the raw amino-acid sequence, 509 residues long: Zinc finger CCCH-type with G patch domain-containing protein (509 aa).

The C3H1-type zinc finger occupies 155 to 178 (PCNYYLEGECRFDEIRCRYSHGAL). A disordered region spans residues 253 to 277 (EEDGLTSEDSSSSPHDESSDEIDSD). The region spanning 310–356 (TRGIGSKLMEKMGYIHGTGLGSEGRGIVTPVSAQILPQGRSLDACME) is the G-patch domain. The interval 409-430 (GGESRHQGDQAAKKAKTNDLQQ) is disordered. Basic and acidic residues predominate over residues 411 to 420 (ESRHQGDQAA).

The protein resides in the nucleus. Functionally, transcription repressor. In Drosophila persimilis (Fruit fly), this protein is Zinc finger CCCH-type with G patch domain-containing protein.